Consider the following 126-residue polypeptide: Prefoldin subunit beta (126 aa).

Belongs to the prefoldin subunit beta family. As to quaternary structure, heterohexamer of two alpha and four beta subunits.

It localises to the cytoplasm. Functionally, molecular chaperone capable of stabilizing a range of proteins. Seems to fulfill an ATP-independent, HSP70-like function in archaeal de novo protein folding. The sequence is that of Prefoldin subunit beta from Pyrobaculum neutrophilum (strain DSM 2338 / JCM 9278 / NBRC 100436 / V24Sta) (Thermoproteus neutrophilus).